A 412-amino-acid polypeptide reads, in one-letter code: 1-deoxy-D-xylulose 5-phosphate reductoisomerase (412 aa).

NADPH is bound by residues threonine 5, glycine 6, serine 7, isoleucine 8, glycine 31, arginine 32, asparagine 33, and asparagine 125. Lysine 126 serves as a coordination point for 1-deoxy-D-xylulose 5-phosphate. Glutamate 127 lines the NADPH pocket. Aspartate 151 lines the Mn(2+) pocket. 1-deoxy-D-xylulose 5-phosphate is bound by residues serine 152, glutamate 153, serine 189, and histidine 212. A Mn(2+)-binding site is contributed by glutamate 153. Glycine 218 is a binding site for NADPH. Residues serine 225, asparagine 230, lysine 231, and glutamate 234 each coordinate 1-deoxy-D-xylulose 5-phosphate. Glutamate 234 contributes to the Mn(2+) binding site.

This sequence belongs to the DXR family. Mg(2+) is required as a cofactor. The cofactor is Mn(2+).

It catalyses the reaction 2-C-methyl-D-erythritol 4-phosphate + NADP(+) = 1-deoxy-D-xylulose 5-phosphate + NADPH + H(+). It functions in the pathway isoprenoid biosynthesis; isopentenyl diphosphate biosynthesis via DXP pathway; isopentenyl diphosphate from 1-deoxy-D-xylulose 5-phosphate: step 1/6. In terms of biological role, catalyzes the NADPH-dependent rearrangement and reduction of 1-deoxy-D-xylulose-5-phosphate (DXP) to 2-C-methyl-D-erythritol 4-phosphate (MEP). This is 1-deoxy-D-xylulose 5-phosphate reductoisomerase from Prochlorococcus marinus (strain SARG / CCMP1375 / SS120).